The following is a 309-amino-acid chain: Homoserine O-succinyltransferase (309 aa).

Cys142 (acyl-thioester intermediate) is an active-site residue. Residues Lys163 and Ser192 each coordinate substrate. Residue His235 is the Proton acceptor of the active site. Glu237 is a catalytic residue. Residue Arg249 coordinates substrate.

This sequence belongs to the MetA family.

It localises to the cytoplasm. It carries out the reaction L-homoserine + succinyl-CoA = O-succinyl-L-homoserine + CoA. The protein operates within amino-acid biosynthesis; L-methionine biosynthesis via de novo pathway; O-succinyl-L-homoserine from L-homoserine: step 1/1. Transfers a succinyl group from succinyl-CoA to L-homoserine, forming succinyl-L-homoserine. This is Homoserine O-succinyltransferase from Proteus mirabilis (strain HI4320).